Reading from the N-terminus, the 96-residue chain is (4S)-4-hydroxy-5-phosphonooxypentane-2,3-dione isomerase (96 aa).

An ABM domain is found at 2-91; that stretch reads HVTLVEINVH…MTGPRKKRLF (90 aa).

It belongs to the LsrG family. As to quaternary structure, homodimer.

It localises to the cytoplasm. The catalysed reaction is (2S)-2-hydroxy-3,4-dioxopentyl phosphate = 3-hydroxy-2,4-dioxopentyl phosphate. Its function is as follows. Involved in the degradation of phospho-AI-2, thereby terminating induction of the lsr operon and closing the AI-2 signaling cycle. Catalyzes the conversion of (4S)-4-hydroxy-5-phosphonooxypentane-2,3-dione (P-DPD) to 3-hydroxy-5-phosphonooxypentane-2,4-dione (P-HPD). The polypeptide is (4S)-4-hydroxy-5-phosphonooxypentane-2,3-dione isomerase (Shigella flexneri serotype 5b (strain 8401)).